We begin with the raw amino-acid sequence, 232 residues long: 5'-methylthioadenosine/S-adenosylhomocysteine nucleosidase (232 aa).

Catalysis depends on Glu-12, which acts as the Proton acceptor. Residues Gly-78, Ile-152, and 173-174 each bind substrate; that span reads ME. Asp-197 serves as the catalytic Proton donor.

The protein belongs to the PNP/UDP phosphorylase family. MtnN subfamily. In terms of assembly, homodimer.

The catalysed reaction is S-adenosyl-L-homocysteine + H2O = S-(5-deoxy-D-ribos-5-yl)-L-homocysteine + adenine. It catalyses the reaction S-methyl-5'-thioadenosine + H2O = 5-(methylsulfanyl)-D-ribose + adenine. The enzyme catalyses 5'-deoxyadenosine + H2O = 5-deoxy-D-ribose + adenine. Its pathway is amino-acid biosynthesis; L-methionine biosynthesis via salvage pathway; S-methyl-5-thio-alpha-D-ribose 1-phosphate from S-methyl-5'-thioadenosine (hydrolase route): step 1/2. Catalyzes the irreversible cleavage of the glycosidic bond in both 5'-methylthioadenosine (MTA) and S-adenosylhomocysteine (SAH/AdoHcy) to adenine and the corresponding thioribose, 5'-methylthioribose and S-ribosylhomocysteine, respectively. Also cleaves 5'-deoxyadenosine, a toxic by-product of radical S-adenosylmethionine (SAM) enzymes, into 5-deoxyribose and adenine. Thus, is required for in vivo function of the radical SAM enzymes biotin synthase and lipoic acid synthase, that are inhibited by 5'-deoxyadenosine accumulation. The sequence is that of 5'-methylthioadenosine/S-adenosylhomocysteine nucleosidase from Klebsiella pneumoniae (strain 342).